The following is a 65-amino-acid chain: Prokaryotic ubiquitin-like protein UBact (65 aa).

The span at 1-17 (MEVNMPTTEQGQKNKQM) shows a compositional bias: polar residues. The tract at residues 1-65 (MEVNMPTTEQ…ARRYRQRTGE (65 aa)) is disordered. A compositionally biased stretch (basic and acidic residues) spans 35–65 (KVEKPNTEEILKRMRKVDPDQARRYRQRTGE). An Isoglutamyl lysine isopeptide (Glu-Lys) (interchain with K-? in acceptor proteins) cross-link involves residue glutamate 65.

This sequence belongs to the ubiquitin-like protein UBact family.

Its function is as follows. May function as a protein modifier covalently attached to lysine residues of substrate proteins. This may serve to target the modified proteins for degradation by proteasomes. The sequence is that of Prokaryotic ubiquitin-like protein UBact from Methylacidiphilum infernorum (isolate V4) (Methylokorus infernorum (strain V4)).